Reading from the N-terminus, the 326-residue chain is MSLFDWFANRRKSSQDPQQRPEREIADGLWIKCEACGTLTYTKDLQANQMVCPECTHHIRVSSEQRIQQLIDFNTWVPIDPELRATDPLKFSDRKPYSDRLLEYQRKTGLPDAVQTGIGNIETEPVALGVMDFGFMGGSMGSVVGEKLTRLIEKATQESLPVIIICASGGARMQEGLLSLMQMAKISGALEQHREAKQLYIPILTHPTTGGVTASFAMLGDIIIAEPKATIGFAGRRVIEQTVREKLPENFQTSEYLLKHGFIDAIVPRTQLKKTLVKLIRLHKPHSLTLISDESLETGPHCHLPFQAESHNLSTTDNKIQPTPQG.

Residues 29–298 (LWIKCEACGT…TLISDESLET (270 aa)) form the CoA carboxyltransferase N-terminal domain. Cys33, Cys36, Cys52, and Cys55 together coordinate Zn(2+). A C4-type zinc finger spans residues 33–55 (CEACGTLTYTKDLQANQMVCPEC). Residues 302-326 (CHLPFQAESHNLSTTDNKIQPTPQG) are disordered. A compositionally biased stretch (polar residues) spans 309–326 (ESHNLSTTDNKIQPTPQG).

It belongs to the AccD/PCCB family. Acetyl-CoA carboxylase is a heterohexamer composed of biotin carboxyl carrier protein (AccB), biotin carboxylase (AccC) and two subunits each of ACCase subunit alpha (AccA) and ACCase subunit beta (AccD). It depends on Zn(2+) as a cofactor.

Its subcellular location is the cytoplasm. It carries out the reaction N(6)-carboxybiotinyl-L-lysyl-[protein] + acetyl-CoA = N(6)-biotinyl-L-lysyl-[protein] + malonyl-CoA. It participates in lipid metabolism; malonyl-CoA biosynthesis; malonyl-CoA from acetyl-CoA: step 1/1. Its function is as follows. Component of the acetyl coenzyme A carboxylase (ACC) complex. Biotin carboxylase (BC) catalyzes the carboxylation of biotin on its carrier protein (BCCP) and then the CO(2) group is transferred by the transcarboxylase to acetyl-CoA to form malonyl-CoA. The sequence is that of Acetyl-coenzyme A carboxylase carboxyl transferase subunit beta from Trichodesmium erythraeum (strain IMS101).